The primary structure comprises 26 residues: Dermaseptin-J3 (26 aa).

Val-26 carries the post-translational modification Valine amide.

In terms of tissue distribution, expressed by the skin glands.

The protein resides in the secreted. Has antimicrobial activity. This is Dermaseptin-J3 from Phasmahyla jandaia (Jandaia leaf frog).